We begin with the raw amino-acid sequence, 287 residues long: MSAKIIDGKQVAQTIRNQVAAQVQQRLAQGKRAPGLAVILVGVDPASQVYVGSKRRACEEVGFISRSYDLSATASQEELLALIDRLNDDADVDGILVQLPLPAHCDTTQVLERIRPDKDVDGFHPYNVGRLAQRIPALRPCTPKGIMTLIETTGVKTHGLHAVVVGASNIVGRPMTLELLLAGCTTTTCHRFTQDLEQQVRRADLLVVAVGKPNFIPGEWVKPGALVIDVGINRLADGSLVGDVEFETARNHASFITPVPGGVGPMTVASLMENTLSACQDYHDQAL.

Residues 166-168 (GAS) and I232 each bind NADP(+).

This sequence belongs to the tetrahydrofolate dehydrogenase/cyclohydrolase family. In terms of assembly, homodimer.

It carries out the reaction (6R)-5,10-methylene-5,6,7,8-tetrahydrofolate + NADP(+) = (6R)-5,10-methenyltetrahydrofolate + NADPH. The catalysed reaction is (6R)-5,10-methenyltetrahydrofolate + H2O = (6R)-10-formyltetrahydrofolate + H(+). Its pathway is one-carbon metabolism; tetrahydrofolate interconversion. Functionally, catalyzes the oxidation of 5,10-methylenetetrahydrofolate to 5,10-methenyltetrahydrofolate and then the hydrolysis of 5,10-methenyltetrahydrofolate to 10-formyltetrahydrofolate. The chain is Bifunctional protein FolD from Aeromonas salmonicida (strain A449).